The sequence spans 172 residues: Small ribosomal subunit protein uS5 (172 aa).

The S5 DRBM domain maps to 15–78 (LNDKLIFINR…ANAKRNLSRI (64 aa)).

This sequence belongs to the universal ribosomal protein uS5 family. In terms of assembly, part of the 30S ribosomal subunit. Contacts proteins S4 and S8.

Its function is as follows. With S4 and S12 plays an important role in translational accuracy. In terms of biological role, located at the back of the 30S subunit body where it stabilizes the conformation of the head with respect to the body. This chain is Small ribosomal subunit protein uS5, found in Dehalococcoides mccartyi (strain ATCC BAA-2266 / KCTC 15142 / 195) (Dehalococcoides ethenogenes (strain 195)).